A 621-amino-acid chain; its full sequence is Chaperone protein HscA homolog (621 aa).

This sequence belongs to the heat shock protein 70 family.

Chaperone involved in the maturation of iron-sulfur cluster-containing proteins. Has a low intrinsic ATPase activity which is markedly stimulated by HscB. This chain is Chaperone protein HscA homolog, found in Cupriavidus pinatubonensis (strain JMP 134 / LMG 1197) (Cupriavidus necator (strain JMP 134)).